Reading from the N-terminus, the 268-residue chain is Energy-coupling factor transporter transmembrane protein EcfT (268 aa).

Helical transmembrane passes span 26–46 (IVTFVYIIVMLWASNWQTYAW), 72–92 (IFWLILFTVILQLLFTPGTPI), 106–126 (ILNAIYVMVRFVLIILMSTIL), 149–169 (IGVPVAELALMLAIALRFVPL), and 247–267 (VAFAALIGFVIIFFVIKTWLH).

It belongs to the energy-coupling factor EcfT family. Forms a stable energy-coupling factor (ECF) transporter complex composed of 2 membrane-embedded substrate-binding proteins (S component), 2 ATP-binding proteins (A component) and 2 transmembrane proteins (T component). May be able to interact with more than 1 S component at a time.

The protein localises to the cell membrane. In terms of biological role, transmembrane (T) component of an energy-coupling factor (ECF) ABC-transporter complex. Unlike classic ABC transporters this ECF transporter provides the energy necessary to transport a number of different substrates. The protein is Energy-coupling factor transporter transmembrane protein EcfT of Leuconostoc gelidum subsp. gasicomitatum (strain DSM 15947 / CCUG 46042 / CECT 5767 / JCM 12535 / LMG 18811 / NBRC 113245 / TB1-10) (Leuconostoc gasicomitatum).